The chain runs to 199 residues: NAD(P)H dehydrogenase (quinone) (199 aa).

The Flavodoxin-like domain maps to 4-190 (VLVLYYSAYG…DAARFQGAHV (187 aa)). FMN is bound by residues 10–15 (SAYGHI) and 78–80 (TRY). Tyr12 contributes to the NAD(+) binding site. Trp98 lines the substrate pocket. FMN contacts are provided by residues 113–119 (SSATQHG) and His134.

This sequence belongs to the WrbA family. Requires FMN as cofactor.

It carries out the reaction a quinone + NADH + H(+) = a quinol + NAD(+). The enzyme catalyses a quinone + NADPH + H(+) = a quinol + NADP(+). This Sinorhizobium fredii (strain NBRC 101917 / NGR234) protein is NAD(P)H dehydrogenase (quinone).